The primary structure comprises 412 residues: Mannose-6-phosphate isomerase (412 aa).

Residues Gln99, His101, Glu126, and His265 each contribute to the Zn(2+) site. Arg284 is a catalytic residue.

This sequence belongs to the mannose-6-phosphate isomerase type 1 family. It depends on Zn(2+) as a cofactor.

Its subcellular location is the cytoplasm. The protein localises to the nucleus. It catalyses the reaction D-mannose 6-phosphate = D-fructose 6-phosphate. Its pathway is nucleotide-sugar biosynthesis; GDP-alpha-D-mannose biosynthesis; alpha-D-mannose 1-phosphate from D-fructose 6-phosphate: step 1/2. Involved in the synthesis of the GDP-mannose and dolichol-phosphate-mannose required for a number of critical mannosyl transfer reactions. In Schizosaccharomyces pombe (strain 972 / ATCC 24843) (Fission yeast), this protein is Mannose-6-phosphate isomerase (pmi40).